The following is a 479-amino-acid chain: Glycine betaine methyltransferase (479 aa).

Belongs to the trimethylamine methyltransferase family.

It catalyses the reaction Co(I)-[glycine betaine-specific corrinoid protein] + glycine betaine + H(+) = methyl-Co(III)-[glycine betaine-specific corrinoid protein] + N,N-dimethylglycine. Its function is as follows. Methyltransferase able to methylate free cob(I)alamin in vitro, using glycine betaine as the methyl donor, yealding methylcobalamin (methylCbl) and dimethylglycine. In vivo, probably carries out the methylation of a corrinoid protein, likely the adjacently encoded DSY3155, with glycine betaine, to then supply methyl groups to tetrahydrofolate (THF) for ultimate conversion to carbon dioxide; oxidation of the methyl group would also provide reducing equivalents for anaerobic respiration. Thus, may function in the pathway that allows anaerobic methylotrophic growth of D.hafniense using glycine betaine. Cannot use quaternary amines such as carnitine and choline as substrates, nor tertiary amines such as dimethylglycine or trimethylamine. This Desulfitobacterium hafniense (strain Y51) protein is Glycine betaine methyltransferase.